The following is a 92-amino-acid chain: Small ribosomal subunit protein uS19 (92 aa).

This sequence belongs to the universal ribosomal protein uS19 family.

In terms of biological role, protein S19 forms a complex with S13 that binds strongly to the 16S ribosomal RNA. This Bifidobacterium adolescentis (strain ATCC 15703 / DSM 20083 / NCTC 11814 / E194a) protein is Small ribosomal subunit protein uS19.